Here is an 829-residue protein sequence, read N- to C-terminus: MQPLQLSPIEQQEFDRLLESLHPEQKDLIPGSVIGPFLLKFGLPQKILAKIWDYCDQEDKGSLDRNQVYACFRLISQAQRGATLQELDYNKAGDPPILPKQAKDDHHIKRSSSETADFTPFRIPINPDERSEYEKEFRENLRGHEDSARPGCMPSSIAKPILLKSSLHYAVLAQIWNLADSAHVGYLEMYQYVIARHLVAICKQYNLIHLPRSLPADVIESAKSETPAMNTNIEQGVTQPSLVNTEQLSHQQSISSTKSSKLDEISADNNAQSAVDNKYSSPPQTIDPQANIKALITPEDRSNFYQLFSKIDNENKGYIVGGEAVPFFMASHLDSEELARIWDTVDTQDRGYIDKDEFAVAMEIIKLRLSGKSLASILAYDDNPTEPTMQQNLVSDDTNASTAVPVAFTNDNVSNVPLSVADNEPNSTLNLLASSDTAAFEPTAVSLHENPSSSLEDLQSAFQNTSFQDQVSTQNQANTADISQNTESGSSTQGQMFGIPPTTQSIPLKMAGFPGGVNSSLTDIKEEEAVSENAPQQEERSFEQIKTSIHIAPENISAIEESKSVPLPTSFATTIPGSTSAALDDQQTTEAPFEEPDEPAHEPTEEEQEEMRKLEEKIESTKYGLETIQTSGKTIKQRIEQKKTRLMILREELQELDAIKEEAQKQISQSLIADQQLSTQIGSVGMGKKQAVKELRKLQAKIDSIIADSMSPMGTGAVNSPAIKPQVTPAPPTPAPTPAVKHHPPPPPVRSSISPSMPPAPLTHANSSTPMNYVSQPESPPQSYESIQNDNELLQELLSMGFPREKAVIALEATNYDVNEAANILLSSV.

Residues 10–109 (EQQEFDRLLE…KQAKDDHHIK (100 aa)) form the EH 1 domain. Residues 43–78 (LPQKILAKIWDYCDQEDKGSLDRNQVYACFRLISQA) form the EF-hand 1 domain. The segment at 93-121 (GDPPILPKQAKDDHHIKRSSSETADFTPF) is disordered. S112 and S113 each carry phosphoserine. 2 consecutive EH domains span residues 129 to 225 (ERSE…AKSE) and 300 to 398 (DRSN…SDDT). The EF-hand 2 domain maps to 333-368 (LDSEELARIWDTVDTQDRGYIDKDEFAVAMEIIKLR). 2 stretches are compositionally biased toward polar residues: residues 466-506 (SFQD…TQSI) and 574-590 (TIPGSTSAALDDQQTTE). Disordered regions lie at residues 466–520 (SFQD…VNSS), 574–614 (TIPG…MRKL), and 724–785 (KPQV…QSYE). Residues 602 to 709 (EPTEEEQEEM…AKIDSIIADS (108 aa)) are a coiled coil. Pro residues predominate over residues 728–737 (TPAPPTPAPT). Residues 764-774 (HANSSTPMNYV) show a composition bias toward polar residues. Residues 775–785 (SQPESPPQSYE) are compositionally biased toward low complexity. Residues 788–828 (QNDNELLQELLSMGFPREKAVIALEATNYDVNEAANILLSS) form the UBA domain.

The chain is UBA domain-containing protein 8 (ucp8) from Schizosaccharomyces pombe (strain 972 / ATCC 24843) (Fission yeast).